A 175-amino-acid polypeptide reads, in one-letter code: Archaemetzincin (175 aa).

His125 provides a ligand contact to Zn(2+). The Proton acceptor role is filled by Glu126. Residues His129, His135, Cys136, Cys141, Cys160, and Cys163 each contribute to the Zn(2+) site.

The protein belongs to the peptidase M54 family. In terms of assembly, monomer. Zn(2+) serves as cofactor.

Functionally, probable zinc metalloprotease whose natural substrate is unknown. Does not show endo- or exopeptidase activity against resorufin labeled casein, p-nitroanilide (pNA), amidomethylcoumarin (AMC) (one to three amino acids in length), and hippuryl-aminoacid substrates. The protein is Archaemetzincin of Methanopyrus kandleri (strain AV19 / DSM 6324 / JCM 9639 / NBRC 100938).